Consider the following 525-residue polypeptide: GMP synthase [glutamine-hydrolyzing] (525 aa).

The Glutamine amidotransferase type-1 domain maps to 8–207 (KILILDFGSQ…ALDICGCAAN (200 aa)). Catalysis depends on cysteine 85, which acts as the Nucleophile. Catalysis depends on residues histidine 181 and glutamate 183. A GMPS ATP-PPase domain is found at 208–400 (WKPSSIIEDA…LGLPYNMLYR (193 aa)). Position 235 to 241 (235 to 241 (SGGVDSS)) interacts with ATP.

Homodimer.

The enzyme catalyses XMP + L-glutamine + ATP + H2O = GMP + L-glutamate + AMP + diphosphate + 2 H(+). Its pathway is purine metabolism; GMP biosynthesis; GMP from XMP (L-Gln route): step 1/1. Functionally, catalyzes the synthesis of GMP from XMP. The chain is GMP synthase [glutamine-hydrolyzing] from Shewanella putrefaciens (strain CN-32 / ATCC BAA-453).